A 472-amino-acid polypeptide reads, in one-letter code: Violaxanthin de-epoxidase, chloroplastic (472 aa).

Intrachain disulfides connect Cys-133/Cys-151, Cys-138/Cys-145, Cys-157/Cys-174, Cys-161/Cys-170, Cys-189/Cys-196, and Cys-242/Cys-372. Residues 379–462 (VERLEKTVEE…MEAGEVEKLF (84 aa)) are a coiled coil.

Belongs to the calycin superfamily. Lipocalin family. Disulfide bonds. Reduction of the disulfides results in loss of a rigid structure, a decrease in thermal stability of 15 degrees Celsius and a loss of activity.

It is found in the plastid. The protein localises to the chloroplast thylakoid membrane. The catalysed reaction is all-trans-violaxanthin + 2 L-ascorbate = all-trans-zeaxanthin + 2 L-dehydroascorbate + 2 H2O. With respect to regulation, irreversibly inhibited by DTT and iodoacetamide at pH 5.7 or pH 5.2, but not at pH 7.2. Regulated through Ca(2+) gating of H(+) flux at the CFoH(+) channel. Requires the presence of lipids forming reverse hexagonal structures such as monogalactosyldiacylglyceride (MGDG) or phosphatidylethanolamine. A negative curvature elastic stress in the thylakoid lipid bilayer is required for VDE1 activity. In terms of biological role, part of the xanthophyll (or violaxanthin) cycle for controlling the concentration of zeaxanthin in chloroplasts. Catalyzes the two-step mono de-epoxidation reaction. Stereospecific for all-trans xanthophylls. Zeaxanthin induces the dissipation of excitation energy in the chlorophyll of the light-harvesting protein complex of photosystem II. The polypeptide is Violaxanthin de-epoxidase, chloroplastic (Spinacia oleracea (Spinach)).